Here is a 397-residue protein sequence, read N- to C-terminus: MDVLYSLSKTLKDARDKIVEGTLYSNVSDLIQQFNQMIITMNGNEFQTGGIGNLPTRNWSFDFGLLGTTLLNLDANYVETARNTIDYFVDFVDNVCMDEMVRESQRNGIAPQSESLRKLSGIKFKRINFDNSSEYIENWNLQNRRQRTGFTFHKPNIFPYSASFTLNRSQPAHDNLMGTMWLNAGSEIHVAGFDYSCAINAPANIQQFEHIVQLRRVLTTATITLLPDAERFSFPRVINSADGATTWYFNPVILRPNNVEVEFLLNGQIINTYQARFGTIVARNFDTIRLSFQLMRPPNMTPSVAALFPNAQPFEHHATVGLTLRIESAICESVLADASETMLANVTSVRQEYAIPVGPVFPPGMNWTDLITNYSPSREDNLHRVFTVASIRSMLVK.

The interval 62-73 is interaction with the inner capsid protein VP2; it reads DFGLLGTTLLNL. Position 153 (His-153) interacts with Zn(2+). Ca(2+) contacts are provided by Asn-266 and Asp-286.

It belongs to the rotavirus VP6 family. In terms of assembly, homotrimer. Interacts with the inner capsid protein VP2. Interacts with the outer capsid glycoprotein VP7. Interacts with the outer capsid protein VP5*. The N-terminus is blocked. In terms of processing, sumoylated with SUMO1 and SUMO2. Sumoylation of viral proteins seems to have a positive role on viral replication.

It localises to the virion. Intermediate capsid protein that self assembles to form an icosahedral capsid with a T=13 symmetry, which consists of 230 trimers of VP6, with channels at each of its five-fold vertices. This capsid constitutes the middle concentric layer of the viral mature particle. The innermost VP2 capsid and the intermediate VP6 capsid remain intact following cell entry to protect the dsRNA from degradation and to prevent unfavorable antiviral responses in the host cell during all the replication cycle of the virus. Nascent transcripts are transcribed within the structural confines of this double-layered particle (DLP) and are extruded through the channels at the five-fold axes. VP6 is required for the transcription activity of the DLP. This is Intermediate capsid protein VP6 from Homo sapiens (Human).